The chain runs to 91 residues: Parbolysin P6 (91 aa).

Disulfide bonds link C16–C37, C22–C33, and C47–C60.

This sequence belongs to the worm cytolysin family. In terms of tissue distribution, localized within the skin and proboscis and are most readily isolated from body mucus secretions.

The protein localises to the secreted. In terms of biological role, cytolysin that shows hemolytic activity (on bovine erythrocytes, HC(50)=5.75 mg/ml). This hemolytic activity is completely inhibited by small unilamelar vesicles composed of PC/PG, PC/PI and PC/PS in 1:1 molar ratios (with at least 100 mg/ml concentration). This Parborlasia corrugatus (Antarctic nemertean worm) protein is Parbolysin P6.